A 340-amino-acid chain; its full sequence is Selenide, water dikinase (340 aa).

Sec17 is an active-site residue. A non-standard amino acid (selenocysteine) is located at residue Sec17. ATP is bound by residues Lys20 and 45-47 (NNE). A Mg(2+)-binding site is contributed by Asp48. ATP is bound by residues Asp65, Asp88, and 136–138 (GHT). Position 88 (Asp88) interacts with Mg(2+). Position 224 (Asp224) interacts with Mg(2+).

This sequence belongs to the selenophosphate synthase 1 family. Class I subfamily. Homodimer. Mg(2+) is required as a cofactor.

The enzyme catalyses hydrogenselenide + ATP + H2O = selenophosphate + AMP + phosphate + 2 H(+). Synthesizes selenophosphate from selenide and ATP. The protein is Selenide, water dikinase of Campylobacter jejuni (strain RM1221).